The primary structure comprises 283 residues: MIEQIFFGQFQSPGPVMFQIGGFALRWYGFLIASAVIIGLNLCQWLGQKRGINPDLFNDLVIWLVVAAIPSARLYYVAFEWPRYAQHWLNIFAIWQGGIAIHGALIGGTIAILVFSRYHQLSFWNLLDVLTPAVILGQAIGRWGNFFNSEAFGAPTNLPWKLYIPFANRPLNLTSYAYFHPTFLYESVWNLGIFAILIALFFYGLRNPEKIKTGTITCVYLIGYSLGRVWIEGLRLDSLMLGPLRIAQVVSITLVLLGTAGIVWLYLLQKNLPDWSERKLVKN.

Transmembrane regions (helical) follow at residues 20 to 40, 60 to 80, 94 to 114, and 121 to 141; these read IGGF…IIGL, LVIW…VAFE, IWQG…AILV, and LSFW…QAIG. Arg142 serves as a coordination point for a 1,2-diacyl-sn-glycero-3-phospho-(1'-sn-glycerol). The next 3 helical transmembrane spans lie at 183-203, 214-234, and 248-268; these read FLYE…LFFY, GTIT…IEGL, and QVVS…LYLL.

It belongs to the Lgt family.

It localises to the cell inner membrane. The catalysed reaction is L-cysteinyl-[prolipoprotein] + a 1,2-diacyl-sn-glycero-3-phospho-(1'-sn-glycerol) = an S-1,2-diacyl-sn-glyceryl-L-cysteinyl-[prolipoprotein] + sn-glycerol 1-phosphate + H(+). It functions in the pathway protein modification; lipoprotein biosynthesis (diacylglyceryl transfer). Functionally, catalyzes the transfer of the diacylglyceryl group from phosphatidylglycerol to the sulfhydryl group of the N-terminal cysteine of a prolipoprotein, the first step in the formation of mature lipoproteins. The chain is Phosphatidylglycerol--prolipoprotein diacylglyceryl transferase from Synechocystis sp. (strain ATCC 27184 / PCC 6803 / Kazusa).